The chain runs to 1091 residues: ATP-dependent helicase/deoxyribonuclease subunit B (1091 aa).

This sequence belongs to the helicase family. AddB/RexB type 2 subfamily. In terms of assembly, heterodimer of AddA and RexB. It depends on Mg(2+) as a cofactor.

Its function is as follows. The heterodimer acts as both an ATP-dependent DNA helicase and an ATP-dependent, dual-direction single-stranded exonuclease. Recognizes the chi site generating a DNA molecule suitable for the initiation of homologous recombination. This subunit has 5' -&gt; 3' nuclease activity but not helicase activity. This Streptococcus pneumoniae (strain CGSP14) protein is ATP-dependent helicase/deoxyribonuclease subunit B.